Here is a 1390-residue protein sequence, read N- to C-terminus: DNA-directed RNA polymerase subunit beta (1390 aa).

It belongs to the RNA polymerase beta chain family. The RNAP catalytic core consists of 2 alpha, 1 beta, 1 beta' and 1 omega subunit. When a sigma factor is associated with the core the holoenzyme is formed, which can initiate transcription.

The catalysed reaction is RNA(n) + a ribonucleoside 5'-triphosphate = RNA(n+1) + diphosphate. DNA-dependent RNA polymerase catalyzes the transcription of DNA into RNA using the four ribonucleoside triphosphates as substrates. This is DNA-directed RNA polymerase subunit beta from Mycoplasma genitalium (strain ATCC 33530 / DSM 19775 / NCTC 10195 / G37) (Mycoplasmoides genitalium).